A 3418-amino-acid chain; its full sequence is Breast cancer type 2 susceptibility protein (3418 aa).

The tract at residues 1-40 (MPIGSKERPTFFEIFKTRCNKADLGPISLNWFEELSSEAP) is interaction with PALB2. The disordered stretch occupies residues 37–68 (SEAPPYNSEPAEESEHKNNNYEPNLFKTPQRK). A Phosphoserine modification is found at serine 70. Positions 358–381 (VEPNDTDPLDSNVANQKPFESGSD) are disordered. A phosphoserine mark is found at serine 445, serine 492, and serine 755. The interval 639-1000 (LHSSVKRSCS…NKWAGLLGPI (362 aa)) is interaction with NPM1. 6 BRCA2 repeats span residues 1002-1036 (NHSF…DIEE), 1212-1246 (NEVG…DIEN), 1421-1455 (FETS…QKPE), 1517-1551 (KEPT…EKEQ), 1664-1698 (IENS…EGIF), and 1837-1871 (FEVG…DSFS). An interaction with RAD51 region spans residues 1003-2082 (HSFGGSFRTA…LHKVKGVLEE (1080 aa)). An interaction with POLH region spans residues 1338–1781 (GSDSSKNDTV…IEPVLKNVED (444 aa)). A required for stimulation of POLH DNA polymerization activity region spans residues 1410–1595 (TATKTEQNIK…TAAPKCKEMQ (186 aa)). Serine 1970 carries the post-translational modification Phosphoserine. The BRCA2 7 repeat unit spans residues 1971-2005 (SANTCGIFSTASGKSVQVSDASLQNARQVFSEIED). A Phosphothreonine modification is found at threonine 2035. A BRCA2 8 repeat occupies 2051–2085 (NSSAFSGFSTASGKQVSILESSLHKVKGVLEEFDL). Residue serine 2095 is modified to Phosphoserine. Positions 2270–2337 (GKRRGEPLIL…EPITCVPFRT (68 aa)) are interaction with HSF2BP. The interval 2350-2545 (TAPGQEFLSK…SHKQLYTYGV (196 aa)) is interaction with FANCD2. The interval 2430–2450 (ENRQKQNIDGHGSDDSKNKIN) is disordered. The interval 2481–2832 (ITSLQNARDI…QRAYPIQWME (352 aa)) is interaction with SEM1. The Nuclear export signal; masked by interaction with SEM1 motif lies at 2682–2698 (AAKTLVLCVSDIISLSA). Serine 3291 bears the Phosphoserine; by CDK1 and CDK2 mark. Serine 3319 is subject to Phosphoserine. Position 3387 is a phosphothreonine; by CHEK1 and CHEK2 (threonine 3387). Residues 3393–3418 (EQESSQASTEECEKNKQDTITTKKYI) are disordered.

In terms of assembly, monomer and dimer. Interacts with RAD51; regulates RAD51 recruitment and function at sites of DNA repair. Interacts with WDR16, USP11, DMC1, ROCK2 and NPM1. Interacts with SEM1; the interaction masks a nuclear export signal in BRCA2. Interacts with both nonubiquitinated and monoubiquitinated FANCD2; this complex also includes XRCC3 and phosphorylated FANCG. Part of a BRCA complex containing BRCA1, BRCA2 and PALB2. Component of the homologous recombination repair (HR) complex composed of ERCC5/XPG, BRCA2, PALB2, DSS1 and RAD51. Within the complex, interacts with ERCC5/XPG and PALB2. Interacts directly with PALB2 which may serve as a scaffold for a HR complex containing PALB2, BRCA2, RAD51C, RAD51 and XRCC3. Interacts with BRCA1 only in the presence of PALB2 which serves as the bridging protein. Interacts with POLH; the interaction is direct. Interacts with the TREX-2 complex subunits PCID2 and SEM1. Interacts with HSF2BP and BRME1; the interaction with HSF2BP is direct and allows the formation of a ternary complex. The complex BRME1:HSF2BP:BRCA2 interacts with SPATA22, MEIOB and RAD51. Phosphorylated by ATM upon irradiation-induced DNA damage. Phosphorylation by CHEK1 and CHEK2 regulates interaction with RAD51. Phosphorylation at Ser-3291 by CDK1 and CDK2 is low in S phase when recombination is active, but increases as cells progress towards mitosis; this phosphorylation prevents homologous recombination-dependent repair during S phase and G2 by inhibiting RAD51 binding. In terms of processing, ubiquitinated in the absence of DNA damage; this does not lead to proteasomal degradation. In contrast, ubiquitination in response to DNA damage leads to proteasomal degradation. As to expression, highest levels of expression in breast and thymus, with slightly lower levels in lung, ovary and spleen.

The protein localises to the nucleus. It is found in the cytoplasm. Its subcellular location is the cytoskeleton. The protein resides in the microtubule organizing center. It localises to the centrosome. Its function is as follows. Involved in double-strand break repair and/or homologous recombination. Binds RAD51 and potentiates recombinational DNA repair by promoting assembly of RAD51 onto single-stranded DNA (ssDNA). Acts by targeting RAD51 to ssDNA over double-stranded DNA, enabling RAD51 to displace replication protein-A (RPA) from ssDNA and stabilizing RAD51-ssDNA filaments by blocking ATP hydrolysis. Part of a PALB2-scaffolded HR complex containing RAD51C and which is thought to play a role in DNA repair by HR. May participate in S phase checkpoint activation. Binds selectively to ssDNA, and to ssDNA in tailed duplexes and replication fork structures. May play a role in the extension step after strand invasion at replication-dependent DNA double-strand breaks; together with PALB2 is involved in both POLH localization at collapsed replication forks and DNA polymerization activity. In concert with NPM1, regulates centrosome duplication. Interacts with the TREX-2 complex (transcription and export complex 2) subunits PCID2 and SEM1, and is required to prevent R-loop-associated DNA damage and thus transcription-associated genomic instability. Silencing of BRCA2 promotes R-loop accumulation at actively transcribed genes in replicating and non-replicating cells, suggesting that BRCA2 mediates the control of R-loop associated genomic instability, independently of its known role in homologous recombination. The protein is Breast cancer type 2 susceptibility protein of Homo sapiens (Human).